Reading from the N-terminus, the 265-residue chain is Serine protease harobin (265 aa).

Residues 1–18 (MPLIRVLASLLILQLSYG) form the signal peptide. Residues 19 to 33 (KSLDNGAKAITSLDR) constitute a propeptide that is removed on maturation. The region spanning 34–257 (IIGGFECNPS…YKDWIEGIIA (224 aa)) is the Peptidase S1 domain. Cystine bridges form between Cys-40-Cys-172, Cys-59-Cys-75, Cys-106-Cys-152, Cys-107-Cys-264, Cys-151-Cys-218, Cys-183-Cys-197, and Cys-208-Cys-233. His-74 serves as the catalytic Charge relay system. Asn-112 is a glycosylation site (N-linked (GlcNAc...) asparagine). Residue Asp-119 is the Charge relay system of the active site. Asn-130 carries N-linked (GlcNAc...) asparagine glycosylation. The active-site Charge relay system is Ser-212.

It belongs to the peptidase S1 family. Snake venom subfamily. In terms of assembly, monomer. Harobin contains three additional Cys residues than other snake venom serine proteases, suggesting an additional disulfide bond. In addition, it is more stable than other snake 6-disulfide-bond serine proteases, since it is less sensitive to DTT. As to expression, expressed by the venom gland.

It localises to the secreted. With respect to regulation, inhibited by PMSF. Serine protein with fibrinolytic and fibrinogenolytic activities. Degrades Bbeta-chain (FGB) of fibrinogen first and then the Aalpha-chain (FGA). Gamma-chain (FGG) are also digested on prolonged incubation. In vitro, it cleaves high molecular weight (HMW) kininogen (KNG) releasing bradykinin that promotes vasodilation. In vitro and in vivo, it cleaves angiotensin-2 (AGT). This explains the reduction of blood pressure in hypertensive rats. Also has antithrombotic effects on thrombosis animal models. In Hydrophis hardwickii (Hardwick's spine-bellied seasnake), this protein is Serine protease harobin.